The following is a 1066-amino-acid chain: Vinculin (1066 aa).

The N-terminal globular head stretch occupies residues 1–835; it reads MPVFHTRTIE…GAVAKVREAF (835 aa). S97 carries the post-translational modification Phosphoserine. A talin-interaction region spans residues 168–208; it reads MTKMAKMIDERQQELTHQEHRVMLVNSMNTVKELLPVLISA. K173 carries the post-translational modification N6-acetyllysine. A run of 3 repeats spans residues 259–369, 370–479, and 480–589. Residues 259–589 are 3 X 112 AA tandem repeats; that stretch reads ASKDTEAMKR…LKDLKTQMQE (331 aa). S260, S272, S275, S290, S346, and S434 each carry phosphoserine. Residue K496 is modified to N6-acetyllysine. Position 537 is a phosphotyrosine (Y537). A phosphoserine mark is found at S574, S579, and S600. Residues T604 and T672 each carry the phosphothreonine modification. Phosphoserine is present on S721. Residues 741-764 are interaction with ACTN4; sequence MANIQPQMLVAGATSIARRANRIL. S795 and S809 each carry phosphoserine. Y822 is subject to Phosphotyrosine. Residues 836–878 are linker (Pro-rich); sequence QPQEPDFPPPPPDLEQLRLTDELAPPKPPLPEGEVPPPRPPPP. Residues 857 to 887 form a disordered region; the sequence is ELAPPKPPLPEGEVPPPRPPPPEEKDEEFPE. Over residues 860 to 876 the composition is skewed to pro residues; it reads PPKPPLPEGEVPPPRPP. The segment at 879 to 1066 is C-terminal tail; the sequence is EEKDEEFPEQ…RWVRKTPWYQ (188 aa). Facilitates phospholipid membrane insertion stretches follow at residues 935–978 and 1052–1066; these read RLVR…KRIR and AGFT…PWYQ. A Phosphotyrosine; by SRC-type Tyr-kinases modification is found at Y1065.

The protein belongs to the vinculin/alpha-catenin family. As to quaternary structure, exhibits self-association properties. Part of a complex composed of THSD1, PTK2/FAK1, TLN1 and VCL. Interacts with APBB1IP, NRAP and TLN1. Interacts with CTNNB1 and this interaction is necessary for its localization to the cell-cell junctions and for its function in regulating cell surface expression of E-cadherin. Interacts with SORBS1. Interacts with SYNM. Interacts with CTNNA1. Binds to ACTN4; this interaction triggers conformational changes. Interacts with FLII. In terms of processing, phosphorylated; on serines, threonines and tyrosines. Phosphorylation on Tyr-1065 in activated platelets affects head-tail interactions and cell spreading but has no effect on actin binding nor on localization to focal adhesion plaques. Post-translationally, acetylated; mainly by myristic acid but also by a small amount of palmitic acid.

The protein localises to the cell membrane. It is found in the cell junction. Its subcellular location is the adherens junction. It localises to the focal adhesion. The protein resides in the cytoplasm. The protein localises to the cytoskeleton. It is found in the sarcolemma. Its subcellular location is the cell projection. It localises to the podosome. Actin filament (F-actin)-binding protein involved in cell-matrix adhesion and cell-cell adhesion. Regulates cell-surface E-cadherin expression and potentiates mechanosensing by the E-cadherin complex. May also play important roles in cell morphology and locomotion. This Rattus norvegicus (Rat) protein is Vinculin.